Here is a 315-residue protein sequence, read N- to C-terminus: Methionyl-tRNA formyltransferase (315 aa).

Residue 113–116 (SLLP) participates in (6S)-5,6,7,8-tetrahydrofolate binding.

The protein belongs to the Fmt family.

It carries out the reaction L-methionyl-tRNA(fMet) + (6R)-10-formyltetrahydrofolate = N-formyl-L-methionyl-tRNA(fMet) + (6S)-5,6,7,8-tetrahydrofolate + H(+). Attaches a formyl group to the free amino group of methionyl-tRNA(fMet). The formyl group appears to play a dual role in the initiator identity of N-formylmethionyl-tRNA by promoting its recognition by IF2 and preventing the misappropriation of this tRNA by the elongation apparatus. The chain is Methionyl-tRNA formyltransferase from Yersinia enterocolitica serotype O:8 / biotype 1B (strain NCTC 13174 / 8081).